A 289-amino-acid chain; its full sequence is Thioredoxin-like protein 1 (289 aa).

A Thioredoxin domain is found at 2-109; sequence VGVKPVGSDP…EEKIKQHLEN (108 aa). Cysteine 34 and cysteine 37 are joined by a disulfide. Serine 113 carries the phosphoserine modification. A PITH domain is found at 115-285; it reads EDADIPKGYM…NDFKRVVGKK (171 aa).

In terms of assembly, component of the 19S regulatory cap of the 26S proteasome. Interacts with PSMD14/RPN11. Interacts with, and reduces EEF1A1.

Its subcellular location is the cytoplasm. It localises to the nucleus. Functionally, active thioredoxin with a redox potential of about -250 mV. This chain is Thioredoxin-like protein 1 (Txnl1), found in Mus musculus (Mouse).